A 1281-amino-acid polypeptide reads, in one-letter code: Enterobactin synthase component F (1281 aa).

The interval 1 to 301 (MSQHLPLVAA…NVLPLGIHIA (301 aa)) is elongation/condensation. The tract at residues 486–891 (SYREMHEQVV…ALPDVKQAVT (406 aa)) is adenylation. The Carrier domain maps to 975–1050 (APKAGSETII…KLATIIDGEE (76 aa)). Residue S1010 is modified to O-(pantetheine 4'-phosphoryl)serine. Residues 1070-1281 (PTLFCFHPAS…GPIIRATLNR (212 aa)) form a thioesterase region. The active-site Proton acceptor; for thioesterase activity is H1259.

Belongs to the ATP-dependent AMP-binding enzyme family. EntF subfamily. As to quaternary structure, proteins EntB, EntD, EntE and EntF are the component of the enterobactin synthase. Components probably do not form a stable complex. EntF acts as a catalytic monomer. Requires pantetheine 4'-phosphate as cofactor. 4'-phosphopantetheine is transferred from CoA to a specific serine of apo-EntF by EntD. Holo-EntF so formed is then acylated with seryl-AMP.

Its subcellular location is the cytoplasm. It carries out the reaction 3 2,3-dihydroxybenzoate + 3 L-serine + 6 ATP = enterobactin + 6 AMP + 6 diphosphate + 4 H(+). It catalyses the reaction holo-[peptidyl-carrier protein] + L-serine + ATP = L-seryl-[peptidyl-carrier protein] + AMP + diphosphate. The protein operates within siderophore biosynthesis; enterobactin biosynthesis. Functionally, involved in the biosynthesis of the siderophore enterobactin (enterochelin), which is a macrocyclic trimeric lactone of N-(2,3-dihydroxybenzoyl)-serine. EntF catalyzes the activation of L-serine via ATP-dependent PPi exchange reaction to form seryladenylate. Activated L-serine is loaded onto the peptidyl carrier domain via a thioester linkage to the phosphopanthetheine moiety, forming seryl-S-Ppant-EntF. EntF acts then as the sole catalyst for the formation of the three amide and three ester linkages found in enterobactin, using seryladenylate and 2,3-dihydroxybenzoate-S-Ppant-EntB (DHB-S-Ppant-EntB) as substrates, via the formation of a DHB-Ser-S-Ppant-EntF intermediate. The chain is Enterobactin synthase component F (entF) from Shigella flexneri.